The primary structure comprises 505 residues: Probable bifunctional methylthioribulose-1-phosphate dehydratase/enolase-phosphatase E1 (505 aa).

The interval 1–237 is methylthioribulose-1-phosphate dehydratase; sequence MGLDKDGISN…ALKLHQLGLD (237 aa). Residue Cys-109 participates in substrate binding. The Zn(2+) site is built by His-127 and His-129. Glu-152 acts as the Proton donor/acceptor; for methylthioribulose-1-phosphate dehydratase activity in catalysis. His-202 lines the Zn(2+) pocket. Residues 266 to 505 form an enolase-phosphatase E1 region; the sequence is FVLDIEGTTT…FRTAKSLLEL (240 aa). Positions 269 and 271 each coordinate Mg(2+). Residues 404 to 405 and Lys-438 contribute to the substrate site; that span reads SS. Asp-464 contributes to the Mg(2+) binding site.

In the N-terminal section; belongs to the aldolase class II family. MtnB subfamily. The protein in the C-terminal section; belongs to the HAD-like hydrolase superfamily. MasA/MtnC family. The cofactor is Zn(2+). Requires Mg(2+) as cofactor.

The enzyme catalyses 5-(methylsulfanyl)-D-ribulose 1-phosphate = 5-methylsulfanyl-2,3-dioxopentyl phosphate + H2O. The catalysed reaction is 5-methylsulfanyl-2,3-dioxopentyl phosphate + H2O = 1,2-dihydroxy-5-(methylsulfanyl)pent-1-en-3-one + phosphate. The protein operates within amino-acid biosynthesis; L-methionine biosynthesis via salvage pathway; L-methionine from S-methyl-5-thio-alpha-D-ribose 1-phosphate: step 2/6. It participates in amino-acid biosynthesis; L-methionine biosynthesis via salvage pathway; L-methionine from S-methyl-5-thio-alpha-D-ribose 1-phosphate: step 3/6. It functions in the pathway amino-acid biosynthesis; L-methionine biosynthesis via salvage pathway; L-methionine from S-methyl-5-thio-alpha-D-ribose 1-phosphate: step 4/6. The protein is Probable bifunctional methylthioribulose-1-phosphate dehydratase/enolase-phosphatase E1 of Physcomitrium patens (Spreading-leaved earth moss).